We begin with the raw amino-acid sequence, 153 residues long: uncharacterized protein (153 aa).

This is an uncharacterized protein from Allochromatium vinosum (strain ATCC 17899 / DSM 180 / NBRC 103801 / NCIMB 10441 / D) (Chromatium vinosum).